Reading from the N-terminus, the 173-residue chain is Nucleoside-triphosphatase THEP1 (173 aa).

Residues 15-22 (GMPGVGKT) and 101-108 (LKIIDEIG) each bind ATP.

The protein belongs to the THEP1 NTPase family.

The catalysed reaction is a ribonucleoside 5'-triphosphate + H2O = a ribonucleoside 5'-diphosphate + phosphate + H(+). Functionally, has nucleotide phosphatase activity towards ATP, GTP, CTP, TTP and UTP. May hydrolyze nucleoside diphosphates with lower efficiency. This chain is Nucleoside-triphosphatase THEP1, found in Pyrobaculum aerophilum (strain ATCC 51768 / DSM 7523 / JCM 9630 / CIP 104966 / NBRC 100827 / IM2).